The sequence spans 1325 residues: RIMS-binding protein 2 (1325 aa).

Residues 153 to 181 are disordered; that stretch reads TFLSKSRSDTPRCRFDSDMDNDQNSNTSK. Over residues 158 to 169 the composition is skewed to basic and acidic residues; the sequence is SRSDTPRCRFDS. The 68-residue stretch at 186–253 folds into the SH3 1 domain; sequence GKVHLCIARY…PSNFVDFVQD (68 aa). Fibronectin type-III domains lie at 315–408, 411–493, and 507–608; these read VPYP…GKDV, APSN…KKEA, and PPQD…VPPS. 3 disordered regions span residues 601–778, 988–1010, and 1040–1090; these read SDLL…GSDL, DLGS…KKYE, and AAGP…SRPM. Residues 627–641 are compositionally biased toward basic and acidic residues; it reads ETKEEHLGPHLKIDE. Over residues 664–676 the composition is skewed to polar residues; the sequence is FPSSLQGRRSPSP. A compositionally biased stretch (basic and acidic residues) spans 696–716; that stretch reads MAREAAQRVAESNRMERRSVF. Residues 717–727 are compositionally biased toward polar residues; it reads SERSNAAQYAN. Basic and acidic residues-rich tracts occupy residues 763–774 and 996–1010; these read CHGEDYHTESSR and PRSE…KKYE. SH3 domains lie at 1121 to 1189 and 1225 to 1292; these read ISTR…EIQA and VSTR…EVPD.

It belongs to the RIMBP family. As to quaternary structure, interacts with RIMS1, RIMS2, CACNA1D and CACNA1B, and potentially with other Ca(2+) channel alpha-1 isoforms. Brain, cochlea and retina.

It is found in the cell membrane. Its subcellular location is the synapse. Plays a role in the synaptic transmission as bifunctional linker that interacts simultaneously with RIMS1, RIMS2, CACNA1D and CACNA1B. This Gallus gallus (Chicken) protein is RIMS-binding protein 2 (RIMBP2).